Here is a 412-residue protein sequence, read N- to C-terminus: Isocitrate dehydrogenase [NADP] cytoplasmic (412 aa).

NADP(+)-binding positions include 76 to 78 and R83; that span reads TIT. T78 serves as a coordination point for substrate. Substrate contacts are provided by residues 95 to 101, R110, and R133; that span reads SPNGTIR. D253 serves as a coordination point for Mn(2+). An NADP(+)-binding site is contributed by K261. D276 serves as a coordination point for Mn(2+). NADP(+) contacts are provided by residues 309–314 and N327; that span reads GTVTRH.

It belongs to the isocitrate and isopropylmalate dehydrogenases family. As to quaternary structure, homodimer. Mg(2+) is required as a cofactor. It depends on Mn(2+) as a cofactor.

It is found in the cytoplasm. The catalysed reaction is D-threo-isocitrate + NADP(+) = 2-oxoglutarate + CO2 + NADPH. In Dictyostelium discoideum (Social amoeba), this protein is Isocitrate dehydrogenase [NADP] cytoplasmic (idhC).